The chain runs to 558 residues: Glucose-6-phosphate isomerase (558 aa).

At Ala-2 the chain carries N-acetylalanine. Lys-12 is modified (N6-acetyllysine). A phosphoserine mark is found at Ser-86 and Ser-107. The residue at position 142 (Lys-142) is an N6-acetyllysine. 159-160 (GS) contacts D-glucose 6-phosphate. Phosphoserine; by CK2 is present on Ser-185. Residue 210–215 (SKTFTT) participates in D-glucose 6-phosphate binding. Phosphothreonine is present on Thr-250. The D-glucose 6-phosphate site is built by Gln-354, Glu-358, and His-389. The active-site Proton donor is the Glu-358. His-389 is a catalytic residue. Residue Lys-454 is modified to N6-acetyllysine; alternate. Lys-454 carries the N6-malonyllysine; alternate modification. N6-succinyllysine; alternate is present on Lys-454. Phosphoserine is present on Ser-455. Lys-519 is a binding site for D-glucose 6-phosphate. Lys-519 is an active-site residue.

This sequence belongs to the GPI family. In terms of assembly, homodimer; in the catalytically active form. Monomer in the secreted form. Post-translationally, phosphorylation at Ser-185 by CK2 has been shown to decrease enzymatic activity and may contribute to secretion by a non-classical secretory pathway. In terms of processing, ISGylated.

The protein localises to the cytoplasm. The protein resides in the secreted. It carries out the reaction alpha-D-glucose 6-phosphate = beta-D-fructose 6-phosphate. The protein operates within carbohydrate degradation; glycolysis; D-glyceraldehyde 3-phosphate and glycerone phosphate from D-glucose: step 2/4. Functionally, in the cytoplasm, catalyzes the conversion of glucose-6-phosphate to fructose-6-phosphate, the second step in glycolysis, and the reverse reaction during gluconeogenesis. Besides it's role as a glycolytic enzyme, also acts as a secreted cytokine: acts as an angiogenic factor (AMF) that stimulates endothelial cell motility. Acts as a neurotrophic factor, neuroleukin, for spinal and sensory neurons. It is secreted by lectin-stimulated T-cells and induces immunoglobulin secretion. This is Glucose-6-phosphate isomerase from Rattus norvegicus (Rat).